Consider the following 100-residue polypeptide: NADH-quinone oxidoreductase subunit K (100 aa).

3 helical membrane passes run 4-24 (LTHG…GLVI), 28-48 (LLFM…AFVV), and 60-80 (IMYI…LALL).

It belongs to the complex I subunit 4L family. NDH-1 is composed of 13 different subunits. Subunits NuoA, H, J, K, L, M, N constitute the membrane sector of the complex.

It is found in the cell inner membrane. The catalysed reaction is a quinone + NADH + 5 H(+)(in) = a quinol + NAD(+) + 4 H(+)(out). Its function is as follows. NDH-1 shuttles electrons from NADH, via FMN and iron-sulfur (Fe-S) centers, to quinones in the respiratory chain. The immediate electron acceptor for the enzyme in this species is believed to be ubiquinone. Couples the redox reaction to proton translocation (for every two electrons transferred, four hydrogen ions are translocated across the cytoplasmic membrane), and thus conserves the redox energy in a proton gradient. The sequence is that of NADH-quinone oxidoreductase subunit K from Klebsiella pneumoniae (strain 342).